We begin with the raw amino-acid sequence, 735 residues long: MEHADQYSWIIPFVPLPIPILIGMGLLLFPTATKNLRRMWAFPNILLLSIVMIFSLDLSIQQINGSSIYQYVWSWTINNDFSFEFGYFIDSLTSIMSILITTVGIFVLIYSDNYMSHDEGYLRFFAYMSLFNTSMLGLVTSCNLIQIYIFWELVGMCSYLLIGFWFTRPAAANACQKAFVTNRIGDFGLLLGILGFYWITGSFEFQDLFEIFNNLIYNNEVHFLFVTLCASLLFAGAVAKSAQFPLHVWLPDAMEGPTPISALIHAATMVAAGIFLVARLLPLFIVIPYIMNLISLIGIITVLLGATLALAQNDIKRGLAYSTMSQLGYMMLALGMGSYRAALFHLITHAYSKALLFLASGSIIHSMEAIVGYSPEKSQNMVFMGGLRKHVPVTQIAFLVGTLSLCGIPPLACFWSKDEILSDSWLYSPIFAIIAWSTAGLTAFYMFRIYLLTFEGHLNVHFQKYSGKKSSSFYSIKLWGKEEQKIINRNFRLFPLLTLTMNNNEQPYTIGGKKEARITITNFGYKKAFSYPHESDNTMLFPMLILLLFTLFVGAIAIPFNQEGMHLDILSKLLTPSINLLHQNSNDFEDSYQFFKNATFSVSIACFGIFTAFLLYKPFYSSVQNLNLLNSFVKRGPKRILLDKMIYLIYDWSYNRGYIDMFYSISLTKGIRGLAELTHFFDRRVIDGITNGVGITSFFVGESVKYLGGSRISFYLLLYLVYVFIFLVISYFILF.

The next 16 helical transmembrane spans lie at 9-29 (WIIP…LLLF), 40-60 (WAFP…DLSI), 89-109 (IDSL…FVLI), 125-145 (FAYM…CNLI), 147-167 (IYIF…FWFT), 184-204 (IGDF…GSFE), 219-239 (NEVH…GAVA), 258-278 (TPIS…FLVA), 280-300 (LLPL…IGII), 327-347 (LGYM…FHLI), 354-374 (ALLF…VGYS), 396-416 (IAFL…CFWS), 425-445 (WLYS…TAFY), 540-560 (LFPM…AIPF), 600-620 (FSVS…KPFY), and 714-734 (FYLL…YFIL).

Belongs to the complex I subunit 5 family. In terms of assembly, NDH is composed of at least 16 different subunits, 5 of which are encoded in the nucleus.

It is found in the plastid. It localises to the chloroplast thylakoid membrane. The catalysed reaction is a plastoquinone + NADH + (n+1) H(+)(in) = a plastoquinol + NAD(+) + n H(+)(out). The enzyme catalyses a plastoquinone + NADPH + (n+1) H(+)(in) = a plastoquinol + NADP(+) + n H(+)(out). In terms of biological role, NDH shuttles electrons from NAD(P)H:plastoquinone, via FMN and iron-sulfur (Fe-S) centers, to quinones in the photosynthetic chain and possibly in a chloroplast respiratory chain. The immediate electron acceptor for the enzyme in this species is believed to be plastoquinone. Couples the redox reaction to proton translocation, and thus conserves the redox energy in a proton gradient. The chain is NAD(P)H-quinone oxidoreductase subunit 5, chloroplastic (ndhF) from Gossypium hirsutum (Upland cotton).